A 490-amino-acid polypeptide reads, in one-letter code: Betaine aldehyde dehydrogenase (490 aa).

The K(+) site is built by Ile27 and Asp93. Gly150–Trp152 lines the NAD(+) pocket. Catalysis depends on Lys162, which acts as the Charge relay system. Lys176–Glu179 is a binding site for NAD(+). A K(+)-binding site is contributed by Val180. Gly230 to Thr233 contacts NAD(+). Leu246 lines the K(+) pocket. Residue Glu252 is the Proton acceptor of the active site. NAD(+)-binding residues include Gly254, Cys286, and Glu387. Cys286 functions as the Nucleophile in the catalytic mechanism. Cys286 carries the cysteine sulfenic acid (-SOH) modification. Residues Lys457 and Gly460 each coordinate K(+). Glu464 functions as the Charge relay system in the catalytic mechanism.

This sequence belongs to the aldehyde dehydrogenase family. Dimer of dimers. Requires K(+) as cofactor.

The enzyme catalyses betaine aldehyde + NAD(+) + H2O = glycine betaine + NADH + 2 H(+). Its pathway is amine and polyamine biosynthesis; betaine biosynthesis via choline pathway; betaine from betaine aldehyde: step 1/1. In terms of biological role, involved in the biosynthesis of the osmoprotectant glycine betaine. Catalyzes the irreversible oxidation of betaine aldehyde to the corresponding acid. This chain is Betaine aldehyde dehydrogenase, found in Pseudomonas fluorescens (strain SBW25).